Consider the following 467-residue polypeptide: Bifunctional protein GlmU (467 aa).

The segment at M1–R229 is pyrophosphorylase. UDP-N-acetyl-alpha-D-glucosamine is bound by residues L8 to G11, K22, Q72, G77 to T78, S100 to D102, G139, E154, N169, and N227. Residue D102 coordinates Mg(2+). N227 contributes to the Mg(2+) binding site. Positions L230–N250 are linker. The segment at G251–K467 is N-acetyltransferase. Positions 332 and 350 each coordinate UDP-N-acetyl-alpha-D-glucosamine. H362 serves as the catalytic Proton acceptor. UDP-N-acetyl-alpha-D-glucosamine-binding residues include Y365 and N376. Residues N385–Y386, S404, A422, and R439 contribute to the acetyl-CoA site.

This sequence in the N-terminal section; belongs to the N-acetylglucosamine-1-phosphate uridyltransferase family. The protein in the C-terminal section; belongs to the transferase hexapeptide repeat family. Homotrimer. Mg(2+) serves as cofactor.

It localises to the cytoplasm. The catalysed reaction is alpha-D-glucosamine 1-phosphate + acetyl-CoA = N-acetyl-alpha-D-glucosamine 1-phosphate + CoA + H(+). The enzyme catalyses N-acetyl-alpha-D-glucosamine 1-phosphate + UTP + H(+) = UDP-N-acetyl-alpha-D-glucosamine + diphosphate. Its pathway is nucleotide-sugar biosynthesis; UDP-N-acetyl-alpha-D-glucosamine biosynthesis; N-acetyl-alpha-D-glucosamine 1-phosphate from alpha-D-glucosamine 6-phosphate (route II): step 2/2. It participates in nucleotide-sugar biosynthesis; UDP-N-acetyl-alpha-D-glucosamine biosynthesis; UDP-N-acetyl-alpha-D-glucosamine from N-acetyl-alpha-D-glucosamine 1-phosphate: step 1/1. It functions in the pathway bacterial outer membrane biogenesis; LPS lipid A biosynthesis. Its function is as follows. Catalyzes the last two sequential reactions in the de novo biosynthetic pathway for UDP-N-acetylglucosamine (UDP-GlcNAc). The C-terminal domain catalyzes the transfer of acetyl group from acetyl coenzyme A to glucosamine-1-phosphate (GlcN-1-P) to produce N-acetylglucosamine-1-phosphate (GlcNAc-1-P), which is converted into UDP-GlcNAc by the transfer of uridine 5-monophosphate (from uridine 5-triphosphate), a reaction catalyzed by the N-terminal domain. This Pediococcus pentosaceus (strain ATCC 25745 / CCUG 21536 / LMG 10740 / 183-1w) protein is Bifunctional protein GlmU.